Reading from the N-terminus, the 724-residue chain is 1,4-alpha-glucan branching enzyme GlgB 1 (724 aa).

The active-site Nucleophile is Asp403. Catalysis depends on Glu456, which acts as the Proton donor.

It belongs to the glycosyl hydrolase 13 family. GlgB subfamily. In terms of assembly, monomer.

It catalyses the reaction Transfers a segment of a (1-&gt;4)-alpha-D-glucan chain to a primary hydroxy group in a similar glucan chain.. The protein operates within glycan biosynthesis; glycogen biosynthesis. Catalyzes the formation of the alpha-1,6-glucosidic linkages in glycogen by scission of a 1,4-alpha-linked oligosaccharide from growing alpha-1,4-glucan chains and the subsequent attachment of the oligosaccharide to the alpha-1,6 position. The protein is 1,4-alpha-glucan branching enzyme GlgB 1 of Xanthomonas campestris pv. campestris (strain 8004).